A 256-amino-acid polypeptide reads, in one-letter code: MAFTLTNKNVIFVAGLGGIGLDTSKELLKRDLKNLVILDRIENPAAIAELKAINPKVTVTFYPYDVTVPIAETTKLLKTIFAKLKTVDVLINGAGILDDHQIERTIAVNYTGLVNTTTAILDFWDKRKGGPGGIICNIGSVTGFNAIYQVPVYSGTKAAVVNFTSSLAKLAPITGVTAYTVNPGITRTTLVHKFNSWLDVEPQVAEKLLAHPTQPSLACAENFVKAIELNQNGAIWKLDLGTLEAIQWTKHWDSGI.

12–35 (FVAGLGGIGLDTSKELLKRDLKNL) lines the NAD(+) pocket. Residue S140 participates in substrate binding. Catalysis depends on Y153, which acts as the Proton acceptor.

It belongs to the short-chain dehydrogenases/reductases (SDR) family. Homodimer.

It carries out the reaction a primary alcohol + NAD(+) = an aldehyde + NADH + H(+). It catalyses the reaction a secondary alcohol + NAD(+) = a ketone + NADH + H(+). The chain is Alcohol dehydrogenase (Adh) from Drosophila sechellia (Fruit fly).